Here is a 330-residue protein sequence, read N- to C-terminus: 5-dehydro-2-deoxygluconokinase (330 aa).

Belongs to the carbohydrate kinase PfkB family.

It catalyses the reaction 5-dehydro-2-deoxy-D-gluconate + ATP = 6-phospho-5-dehydro-2-deoxy-D-gluconate + ADP + H(+). The protein operates within polyol metabolism; myo-inositol degradation into acetyl-CoA; acetyl-CoA from myo-inositol: step 5/7. Functionally, catalyzes the phosphorylation of 5-dehydro-2-deoxy-D-gluconate (2-deoxy-5-keto-D-gluconate or DKG) to 6-phospho-5-dehydro-2-deoxy-D-gluconate (DKGP). The chain is 5-dehydro-2-deoxygluconokinase from Bacillus velezensis (strain DSM 23117 / BGSC 10A6 / LMG 26770 / FZB42) (Bacillus amyloliquefaciens subsp. plantarum).